Here is a 637-residue protein sequence, read N- to C-terminus: Probable serine/threonine-protein kinase DDB_G0283065 (637 aa).

Disordered regions lie at residues 36–88 and 155–234; these read NNNN…KFNR and NSNN…RFNN. A compositionally biased stretch (low complexity) spans 53–85; that stretch reads NNSTTKSIDNNNNNTNNSNSNNNNNDNIKNNNK. The Protein kinase domain occupies 236–629; it reads FNDVRVLGKG…NQISTDYDNF (394 aa). Residues 242-250 and K265 contribute to the ATP site; that span reads LGKGGFGIV. The Proton acceptor role is filled by D479.

This sequence belongs to the protein kinase superfamily. Ser/Thr protein kinase family. GCN2 subfamily.

The catalysed reaction is L-seryl-[protein] + ATP = O-phospho-L-seryl-[protein] + ADP + H(+). It carries out the reaction L-threonyl-[protein] + ATP = O-phospho-L-threonyl-[protein] + ADP + H(+). The sequence is that of Probable serine/threonine-protein kinase DDB_G0283065 from Dictyostelium discoideum (Social amoeba).